The primary structure comprises 336 residues: Inactive serine/threonine-protein kinase PLK5 (336 aa).

The 65-residue stretch at 1–65 (MYTVLTGTPP…LDHLLQDDFF (65 aa)) folds into the Protein kinase; truncated domain. Disordered stretches follow at residues 109–135 (PCPFTPKEASGPGEGGPDPDSMEWDGE) and 224–245 (GRTGRHPHGPATPRREGTLPTP). The 82-residue stretch at 255–336 (LLRFLASEHA…HHALRMLQSI (82 aa)) folds into the POLO box domain.

Belongs to the protein kinase superfamily. Ser/Thr protein kinase family. CDC5/Polo subfamily. Expressed in the brain, neurons and glial cells. Also expressed in highly differentiated cells, such as the serous acini in the parotid gland, distal and proximal tubules of the kidney, tubules of the seminal gland, Kupffer cells and some hepatocytes in the liver, and some cells in the germinal center of lymph nodes (at protein level).

It localises to the nucleus. Its subcellular location is the nucleolus. The protein localises to the cytoplasm. In terms of biological role, inactive serine/threonine-protein kinase that plays a role in cell cycle progression and neuronal differentiation. The polypeptide is Inactive serine/threonine-protein kinase PLK5 (PLK5) (Homo sapiens (Human)).